The following is a 421-amino-acid chain: Glycosaminoglycan xylosylkinase homolog (421 aa).

Residues 1–21 (MNKRSVIIAGIVASLLGLALG) form the signal peptide. A glycan (N-linked (GlcNAc...) asparagine) is linked at Asn83. 2 residues coordinate ATP: Gln131 and Lys147. Asp166 is a Mn(2+) binding site. Cystine bridges form between Cys225–Cys240 and Cys230–Cys233. 252–255 (IYIV) contributes to the ATP binding site. 2 disulfide bridges follow: Cys285–Cys351 and Cys352–Cys409. Asp314 is an active-site residue. Residues Glu319 and Asp329 each coordinate ATP. Asp329 lines the Mn(2+) pocket.

This sequence belongs to the FAM20 family. Requires Mn(2+) as cofactor.

It localises to the golgi apparatus. Its subcellular location is the endoplasmic reticulum. It catalyses the reaction 3-O-(beta-D-galactosyl-(1-&gt;3)-beta-D-galactosyl-(1-&gt;4)-beta-D-xylosyl)-L-seryl-[protein] + ATP = 3-O-(beta-D-galactosyl-(1-&gt;3)-beta-D-galactosyl-(1-&gt;4)-beta-D-2-O-phosphoxylosyl)-L-seryl-[protein] + ADP + H(+). Its function is as follows. Kylose kinase that mediates the 2-O-phosphorylation of xylose in the glycosaminoglycan-protein linkage region of proteoglycans. In Drosophila melanogaster (Fruit fly), this protein is Glycosaminoglycan xylosylkinase homolog.